Reading from the N-terminus, the 262-residue chain is Phosphatidylserine decarboxylase proenzyme (262 aa).

Active-site charge relay system; for autoendoproteolytic cleavage activity residues include Asp-86, His-142, and Ser-226. The Schiff-base intermediate with substrate; via pyruvic acid; for decarboxylase activity role is filled by Ser-226. Ser-226 is modified (pyruvic acid (Ser); by autocatalysis).

This sequence belongs to the phosphatidylserine decarboxylase family. PSD-B subfamily. Prokaryotic type I sub-subfamily. In terms of assembly, heterodimer of a large membrane-associated beta subunit and a small pyruvoyl-containing alpha subunit. Pyruvate is required as a cofactor. Is synthesized initially as an inactive proenzyme. Formation of the active enzyme involves a self-maturation process in which the active site pyruvoyl group is generated from an internal serine residue via an autocatalytic post-translational modification. Two non-identical subunits are generated from the proenzyme in this reaction, and the pyruvate is formed at the N-terminus of the alpha chain, which is derived from the carboxyl end of the proenzyme. The autoendoproteolytic cleavage occurs by a canonical serine protease mechanism, in which the side chain hydroxyl group of the serine supplies its oxygen atom to form the C-terminus of the beta chain, while the remainder of the serine residue undergoes an oxidative deamination to produce ammonia and the pyruvoyl prosthetic group on the alpha chain. During this reaction, the Ser that is part of the protease active site of the proenzyme becomes the pyruvoyl prosthetic group, which constitutes an essential element of the active site of the mature decarboxylase.

It localises to the cell membrane. The enzyme catalyses a 1,2-diacyl-sn-glycero-3-phospho-L-serine + H(+) = a 1,2-diacyl-sn-glycero-3-phosphoethanolamine + CO2. It functions in the pathway phospholipid metabolism; phosphatidylethanolamine biosynthesis; phosphatidylethanolamine from CDP-diacylglycerol: step 2/2. In terms of biological role, catalyzes the formation of phosphatidylethanolamine (PtdEtn) from phosphatidylserine (PtdSer). This is Phosphatidylserine decarboxylase proenzyme from Bacillus thuringiensis subsp. konkukian (strain 97-27).